The chain runs to 176 residues: ATP-dependent protease subunit HslV (176 aa).

Thr5 is an active-site residue. The Na(+) site is built by Ser161, Cys164, and Thr167.

The protein belongs to the peptidase T1B family. HslV subfamily. A double ring-shaped homohexamer of HslV is capped on each side by a ring-shaped HslU homohexamer. The assembly of the HslU/HslV complex is dependent on binding of ATP.

The protein localises to the cytoplasm. The enzyme catalyses ATP-dependent cleavage of peptide bonds with broad specificity.. With respect to regulation, allosterically activated by HslU binding. Its function is as follows. Protease subunit of a proteasome-like degradation complex believed to be a general protein degrading machinery. This Desulfitobacterium hafniense (strain Y51) protein is ATP-dependent protease subunit HslV.